Consider the following 327-residue polypeptide: Biotin synthase (327 aa).

The Radical SAM core domain occupies 49–273 (FNKDKIDLCS…ICIARIALPD (225 aa)). Cys67, Cys71, and Cys74 together coordinate [4Fe-4S] cluster. The [2Fe-2S] cluster site is built by Ser110, Cys142, Cys201, and Arg277.

Belongs to the radical SAM superfamily. Biotin synthase family. As to quaternary structure, homodimer. [4Fe-4S] cluster is required as a cofactor. The cofactor is [2Fe-2S] cluster.

The enzyme catalyses (4R,5S)-dethiobiotin + (sulfur carrier)-SH + 2 reduced [2Fe-2S]-[ferredoxin] + 2 S-adenosyl-L-methionine = (sulfur carrier)-H + biotin + 2 5'-deoxyadenosine + 2 L-methionine + 2 oxidized [2Fe-2S]-[ferredoxin]. It functions in the pathway cofactor biosynthesis; biotin biosynthesis; biotin from 7,8-diaminononanoate: step 2/2. Catalyzes the conversion of dethiobiotin (DTB) to biotin by the insertion of a sulfur atom into dethiobiotin via a radical-based mechanism. This chain is Biotin synthase, found in Methanococcus maripaludis (strain C6 / ATCC BAA-1332).